We begin with the raw amino-acid sequence, 2049 residues long: Polyunsaturated fatty acid synthase subunit B (2049 aa).

Ketosynthase family 3 (KS3) domains lie at 15 to 442 (EKRI…VFEE) and 468 to 908 (NMRI…LLSD). Residues Cys196, His333, and His368 each act as for beta-ketoacyl synthase 1 activity in the active site. Residues 467-984 (NNMRIAITGM…LGETLAQEAD (518 aa)) are chain length factor (CLF) domain. Residues 1044–1377 (RVAFMYGEGR…QRSHVTGAMD (334 aa)) form an acyltransferase (AT) domain region. The tract at residues 1500-1531 (NKDNQPAVAPAATAAPTPKPKPAASSGKPVPS) is disordered. Residues 1505 to 1531 (PAVAPAATAAPTPKPKPAASSGKPVPS) show a composition bias toward low complexity. Residues 1579–1887 (SRAFMKTYGV…SRANKLYELF (309 aa)) form an enoyl reductase (ER) domain region.

As to quaternary structure, component of the polyunsaturated fatty acid synthase complex composed of at least ORF-A, ORF-B and ORF-C.

Its pathway is lipid metabolism; fatty acid biosynthesis. Poliketide synthase-like protein; part of the polyunsaturated fatty acid synthase composed of the 3 PKS-like subunits A, B and C. While the saturated fatty acids (SFAs) in Thraustochytrium are produced by the conventional fatty acid synthase (FAS) pathway, polyunsaturated fatty acids (PUFAs) including docosahexeanoic acid (DHA) and docosapentaenoic acid (DPA) are synthesized via an anaerobical PKS pathway. PUFA synthase assimilates fatty acyl-CoA, the product of FAS, as the starter unit to synthesize DPA, and this starter unit may be butyryl-CoA, hexanoyl-CoA, or octanoyl-CoA. DPA and DHA biosynthesis seem to differ by the reduction at the N-3 position by PUFA synthase, not the extension of carbon chain. In DHA biosynthesis, PUFA synthase extends the fatty acyl chain from the methyl toward the carboxyl end, and the double bond is formed when the carbon chain is growing, instead of afterward. Therefore, PUFA synthase is unable to transform DPA to DHA, suggesting that DPA is not the precursor of DHA. Moreover, DPA molecule is partly extended by FAS KS domain, so DPA biosynthesis is less dependent on PUFA synthase KS domain than DHA. The sequence is that of Polyunsaturated fatty acid synthase subunit B from Thraustochytrium sp. (strain ATCC 26185 / S-3).